The sequence spans 916 residues: DNA repair endonuclease XPF (916 aa).

The tract at residues 1-457 is helicase-like; it reads MESGQPARRI…EVWMKFRKED (457 aa). 2 leucine-zipper regions span residues 233–254 and 270–298; these read LNACLKELKCHNPSLEVEDLSL and LDPLWHQLGAKTKSLVQDLKILRTLLQYL. An N6-acetyllysine modification is found at lysine 289. Residues 460–487 form a disordered region; the sequence is KRIRKSHKRPKDPQNKERASTKERTLKK. The span at 470–483 shows a compositional bias: basic and acidic residues; sequence KDPQNKERASTKER. The short motif at 486–491 is the Nuclear localization signal element; sequence KKKKRK. Lysine 500 participates in a covalent cross-link: Glycyl lysine isopeptide (Lys-Gly) (interchain with G-Cter in SUMO2). Disordered stretches follow at residues 502–526 and 660–679; these read EELEEEGDVEEGYRREISSSPESCP and TASADVSTDTRKAGGQEQNG. At serine 521 the chain carries Phosphoserine. The nuclease stretch occupies residues 658 to 813; the sequence is RGTASADVST…PSPHATAELF (156 aa). The ERCC4 domain maps to 683 to 763; sequence SIVVDMREFR…RPVLLIEFDP (81 aa). A Phosphoserine modification is found at serine 764. A hhH2, dimerization with ERCC1 region spans residues 837-905; the sequence is TLPESEKYNP…QLYDFIHTSF (69 aa). N6-acetyllysine is present on lysine 911.

Belongs to the XPF family. Heterodimer composed of ERCC1 and ERCC4/XPF. Interacts with SLX4/BTBD12; this interaction is direct and links the ERCC1-ERCC4/XPF complex to SLX4, which may coordinate the action of the structure-specific endonuclease during DNA repair. The cofactor is Mg(2+). Acetylation at Lys-911 by KAT5 promotes interaction with ERCC1 by disrupting a salt bridge between Glu-907 and Lys-911, thereby exposing a second binding site for ERCC1. Deacetylated by SIRT1.

The protein resides in the nucleus. It is found in the chromosome. In terms of biological role, catalytic component of a structure-specific DNA repair endonuclease responsible for the 5-prime incision during DNA repair, and which is essential for nucleotide excision repair (NER) and interstrand cross-link (ICL) repair. This is DNA repair endonuclease XPF from Homo sapiens (Human).